The following is a 211-amino-acid chain: FMN-dependent NADH:quinone oxidoreductase 2 (211 aa).

102-105 contributes to the FMN binding site; it reads MWNF.

This sequence belongs to the azoreductase type 1 family. Homodimer. The cofactor is FMN.

It carries out the reaction 2 a quinone + NADH + H(+) = 2 a 1,4-benzosemiquinone + NAD(+). It catalyses the reaction N,N-dimethyl-1,4-phenylenediamine + anthranilate + 2 NAD(+) = 2-(4-dimethylaminophenyl)diazenylbenzoate + 2 NADH + 2 H(+). Functionally, quinone reductase that provides resistance to thiol-specific stress caused by electrophilic quinones. Also exhibits azoreductase activity. Catalyzes the reductive cleavage of the azo bond in aromatic azo compounds to the corresponding amines. The polypeptide is FMN-dependent NADH:quinone oxidoreductase 2 (Bacillus cereus (strain ATCC 14579 / DSM 31 / CCUG 7414 / JCM 2152 / NBRC 15305 / NCIMB 9373 / NCTC 2599 / NRRL B-3711)).